The sequence spans 63 residues: MGLKAKHKENLCSDSQRSKRLYVWIALAIVLSDFTSIFSHWIWGLLILILRTLMDLPTFVMNV.

Residues 21–43 (LYVWIALAIVLSDFTSIFSHWIW) form a helical membrane-spanning segment.

This sequence belongs to the Leviviricetes lysis protein family.

It localises to the host cell inner membrane. Its subcellular location is the host cell outer membrane. Its function is as follows. Induces the formation of specific membrane adhesion sites between the inner and outer membranes, apparently leading to host cell lysis. Lysis may be performed via activation of host murein hydrolases. The chain is Lysis protein from Escherichia coli (Bacteriophage JP34).